The sequence spans 340 residues: Flap endonuclease 1 (340 aa).

The interval 1-98 is N-domain; the sequence is MGVDLGGLVE…ETIKARAEVR (98 aa). Aspartate 27, aspartate 80, glutamate 151, glutamate 153, aspartate 172, aspartate 174, and aspartate 235 together coordinate Mg(2+). The segment at 115-256 is I-domain; sequence EAYKYAQAST…TALKLVKKHG (142 aa). The interaction with PCNA stretch occupies residues 332 to 340; it reads KQKTLSSWF.

The protein belongs to the XPG/RAD2 endonuclease family. FEN1 subfamily. In terms of assembly, interacts with PCNA. PCNA stimulates the nuclease activity without altering cleavage specificity. Mg(2+) is required as a cofactor.

In terms of biological role, structure-specific nuclease with 5'-flap endonuclease and 5'-3' exonuclease activities involved in DNA replication and repair. During DNA replication, cleaves the 5'-overhanging flap structure that is generated by displacement synthesis when DNA polymerase encounters the 5'-end of a downstream Okazaki fragment. Binds the unpaired 3'-DNA end and kinks the DNA to facilitate 5' cleavage specificity. Cleaves one nucleotide into the double-stranded DNA from the junction in flap DNA, leaving a nick for ligation. Also involved in the base excision repair (BER) pathway. Acts as a genome stabilization factor that prevents flaps from equilibrating into structures that lead to duplications and deletions. Also possesses 5'-3' exonuclease activity on nicked or gapped double-stranded DNA. This chain is Flap endonuclease 1, found in Methanocella arvoryzae (strain DSM 22066 / NBRC 105507 / MRE50).